The sequence spans 255 residues: 5'-nucleotidase SurE (255 aa).

The a divalent metal cation site is built by Asp-8, Asp-9, Ser-40, and Asn-92.

Belongs to the SurE nucleotidase family. It depends on a divalent metal cation as a cofactor.

The protein resides in the cytoplasm. It carries out the reaction a ribonucleoside 5'-phosphate + H2O = a ribonucleoside + phosphate. Its function is as follows. Nucleotidase that shows phosphatase activity on nucleoside 5'-monophosphates. In Brucella suis (strain ATCC 23445 / NCTC 10510), this protein is 5'-nucleotidase SurE.